The primary structure comprises 419 residues: L-rhamnose isomerase (419 aa).

The Mn(2+) site is built by histidine 262, aspartate 294, and aspartate 296.

Belongs to the rhamnose isomerase family. Homotetramer. Requires Mn(2+) as cofactor.

The protein resides in the cytoplasm. The enzyme catalyses L-rhamnopyranose = L-rhamnulose. It functions in the pathway carbohydrate degradation; L-rhamnose degradation; glycerone phosphate from L-rhamnose: step 1/3. Functionally, catalyzes the interconversion of L-rhamnose and L-rhamnulose. The protein is L-rhamnose isomerase of Salmonella enteritidis PT4 (strain P125109).